Here is a 230-residue protein sequence, read N- to C-terminus: Carbohydrate deacetylase (230 aa).

The Mg(2+) site is built by His59 and His123.

Belongs to the YdjC deacetylase family. In terms of assembly, homodimer. Mg(2+) is required as a cofactor.

In terms of biological role, probably catalyzes the deacetylation of acetylated carbohydrates an important step in the degradation of oligosaccharides. The sequence is that of Carbohydrate deacetylase from Oceanobacillus iheyensis (strain DSM 14371 / CIP 107618 / JCM 11309 / KCTC 3954 / HTE831).